A 520-amino-acid polypeptide reads, in one-letter code: Cholesterol side-chain cleavage enzyme, mitochondrial (520 aa).

The N-terminal 39 residues, 1 to 39 (MLARGLPLRSALVKACPPILSTVGEGWGHHRVGTGEGAG), are a transit peptide targeting the mitochondrion. Residue Cys-461 participates in heme binding.

This sequence belongs to the cytochrome P450 family. In terms of assembly, interacts with FDX1/adrenodoxin. Heme is required as a cofactor. As to expression, detected in adrenal cortex and corpus luteum (at protein level).

The protein localises to the mitochondrion inner membrane. It carries out the reaction 6 reduced [adrenodoxin] + cholesterol + 3 O2 + 6 H(+) = 4-methylpentanal + pregnenolone + 6 oxidized [adrenodoxin] + 4 H2O. The enzyme catalyses 2 reduced [adrenodoxin] + cholesterol + O2 + 2 H(+) = (22R)-hydroxycholesterol + 2 oxidized [adrenodoxin] + H2O. The catalysed reaction is (22R)-hydroxycholesterol + 2 reduced [adrenodoxin] + O2 + 2 H(+) = (20R,22R)-20,22-dihydroxycholesterol + 2 oxidized [adrenodoxin] + H2O. It catalyses the reaction (20R,22R)-20,22-dihydroxycholesterol + 2 reduced [adrenodoxin] + O2 + 2 H(+) = 4-methylpentanal + pregnenolone + 2 oxidized [adrenodoxin] + 2 H2O. It functions in the pathway lipid metabolism; C21-steroid hormone metabolism. The protein operates within steroid metabolism; cholesterol metabolism. A cytochrome P450 monooxygenase that catalyzes the side-chain hydroxylation and cleavage of cholesterol to pregnenolone, the precursor of most steroid hormones. Catalyzes three sequential oxidation reactions of cholesterol, namely the hydroxylation at C22 followed with the hydroxylation at C20 to yield 20R,22R-hydroxycholesterol that is further cleaved between C20 and C22 to yield the C21-steroid pregnenolone and 4-methylpentanal. Mechanistically, uses molecular oxygen inserting one oxygen atom into a substrate and reducing the second into a water molecule. Two electrons are provided by NADPH via a two-protein mitochondrial transfer system comprising flavoprotein FDXR (adrenodoxin/ferredoxin reductase) and nonheme iron-sulfur protein FDX1 or FDX2 (adrenodoxin/ferredoxin). The protein is Cholesterol side-chain cleavage enzyme, mitochondrial (CYP11A1) of Bos taurus (Bovine).